Here is a 147-residue protein sequence, read N- to C-terminus: D-aminoacyl-tRNA deacylase (147 aa).

The short motif at 137–138 (GP) is the Gly-cisPro motif, important for rejection of L-amino acids element.

Belongs to the DTD family. In terms of assembly, homodimer.

The protein resides in the cytoplasm. The catalysed reaction is glycyl-tRNA(Ala) + H2O = tRNA(Ala) + glycine + H(+). It carries out the reaction a D-aminoacyl-tRNA + H2O = a tRNA + a D-alpha-amino acid + H(+). Functionally, an aminoacyl-tRNA editing enzyme that deacylates mischarged D-aminoacyl-tRNAs. Also deacylates mischarged glycyl-tRNA(Ala), protecting cells against glycine mischarging by AlaRS. Acts via tRNA-based rather than protein-based catalysis; rejects L-amino acids rather than detecting D-amino acids in the active site. By recycling D-aminoacyl-tRNA to D-amino acids and free tRNA molecules, this enzyme counteracts the toxicity associated with the formation of D-aminoacyl-tRNA entities in vivo and helps enforce protein L-homochirality. This Levilactobacillus brevis (strain ATCC 367 / BCRC 12310 / CIP 105137 / JCM 1170 / LMG 11437 / NCIMB 947 / NCTC 947) (Lactobacillus brevis) protein is D-aminoacyl-tRNA deacylase.